A 122-amino-acid chain; its full sequence is Small ribosomal subunit protein uS13 (122 aa).

A disordered region spans residues 94 to 122 (RGLPVRGQRTKTNARQRKGPRPAIGGRKK).

This sequence belongs to the universal ribosomal protein uS13 family. As to quaternary structure, part of the 30S ribosomal subunit. Forms a loose heterodimer with protein S19. Forms two bridges to the 50S subunit in the 70S ribosome.

Functionally, located at the top of the head of the 30S subunit, it contacts several helices of the 16S rRNA. In the 70S ribosome it contacts the 23S rRNA (bridge B1a) and protein L5 of the 50S subunit (bridge B1b), connecting the 2 subunits; these bridges are implicated in subunit movement. Contacts the tRNAs in the A and P-sites. The sequence is that of Small ribosomal subunit protein uS13 from Rubrobacter xylanophilus (strain DSM 9941 / JCM 11954 / NBRC 16129 / PRD-1).